Consider the following 2115-residue polypeptide: Nuclear mitotic apparatus protein 1 (2115 aa).

Residues 1–212 (MTLHATRGAA…SPMGDILQTP (212 aa)) form a head (Globular) region. Serine 162 carries the post-translational modification Phosphoserine. Threonine 163 is modified (phosphothreonine). Phosphoserine is present on residues serine 169 and serine 203. Position 211 is a phosphothreonine (threonine 211). Residues 213 to 1699 (QFQMRRLKKQ…ADQQLRDLGK (1487 aa)) are a coiled coil. Serine 271 is subject to Phosphoserine. Lysine 379 bears the N6-acetyllysine mark. Residues serine 388 and serine 395 each carry the phosphoserine modification. The span at 549 to 560 (LRHQVEQLSSSL) shows a compositional bias: low complexity. 2 disordered regions span residues 549-593 (LRHQ…EERE) and 746-766 (LVEQHKRERKELEEERAGRKG). Basic and acidic residues predominate over residues 561-581 (KQKEQQLKEVAEKQEATRQDH). The residue at position 820 (serine 820) is a Phosphoserine. An N6-acetyllysine modification is found at lysine 891. 2 stretches are compositionally biased toward basic and acidic residues: residues 926 to 950 (AGEQQETASRELVKEPARAGDRQPE) and 996 to 1013 (QEERGQQEREVARLTQER). 2 disordered regions span residues 926 to 958 (AGEQQETASRELVKEPARAGDRQPEWLEEQQGR) and 988 to 1013 (LMESQGQQQEERGQQEREVARLTQER). Threonine 1047 is modified (phosphothreonine; by PLK1). Basic and acidic residues predominate over residues 1090–1102 (LKEQLAKKEKEHA). Disordered regions lie at residues 1090–1225 (LKEQ…RKNS) and 1275–1296 (ETASNSARAAERSSALREEVQS). Composition is skewed to low complexity over residues 1103–1112 (SGSGAQSEAA) and 1133–1142 (EQQCQKQQEQ). The segment covering 1145–1163 (SLERSLEAERASRAERDSA) has biased composition (basic and acidic residues). Position 1187 is a phosphoserine (serine 1187). Residues 1198 to 1224 (KVQDHSKAEDEWKAQVARGRQEAERKN) are compositionally biased toward basic and acidic residues. Serine 1225 bears the Phosphoserine mark. The span at 1283–1296 (AAERSSALREEVQS) shows a compositional bias: basic and acidic residues. Lysine 1511 is modified (N6-acetyllysine). Residue serine 1601 is modified to Phosphoserine. A Glycyl lysine isopeptide (Lys-Gly) (interchain with G-Cter in SUMO2) cross-link involves residue lysine 1699. A membrane-binding domain 1 region spans residues 1699–1876 (KFQVATDALK…NSALLSLPGY (178 aa)). The segment at 1700-2115 (FQVATDALKS…TPRAKGKAKH (416 aa)) is tail (Globular). A phosphoserine mark is found at serine 1721, serine 1724, and serine 1728. Residues 1734–1761 (PLSITSKLPRTQPDGTSVPGEPASPISQ) are disordered. Over residues 1735-1748 (LSITSKLPRTQPDG) the composition is skewed to polar residues. Positions 1742–1748 (PRTQPDG) match the Tankyrase-binding domain motif. Residues serine 1757 and serine 1760 each carry the phosphoserine modification. Lysine 1766 participates in a covalent cross-link: Glycyl lysine isopeptide (Lys-Gly) (interchain with G-Cter in SUMO1); alternate. A Glycyl lysine isopeptide (Lys-Gly) (interchain with G-Cter in SUMO2); alternate cross-link involves residue lysine 1766. 2 positions are modified to phosphoserine; by PLK1: serine 1769 and serine 1772. Tyrosine 1774 carries the post-translational modification Phosphotyrosine. Threonine 1776 is subject to Phosphothreonine. Serine 1788 bears the Phosphoserine mark. A 4.1-binding domain region spans residues 1788–1810 (SSLDSLGDVFLDSGRKTRSARRR). Serine 1789 carries the post-translational modification Phosphoserine; by PLK1. A phosphoserine mark is found at serine 1792 and serine 1800. A Phosphothreonine modification is found at threonine 1804. Lysine 1822 is covalently cross-linked (Glycyl lysine isopeptide (Lys-Gly) (interchain with G-Cter in SUMO2)). 2 disordered regions span residues 1826-1901 (EEPD…GRNS) and 1955-2115 (EMKT…KAKH). A phosphoserine mark is found at serine 1830 and serine 1833. Residues 1830–1857 (SANSSFYSTRSAPASQASLRATSSTQSL) are compositionally biased toward polar residues. Serine 1834 is modified (phosphoserine; by PLK1). Tyrosine 1836 bears the Phosphotyrosine mark. Serine 1840 is modified (phosphoserine). Serine 1844 carries the post-translational modification Phosphoserine; alternate. A glycan (O-linked (GlcNAc) serine; alternate) is linked at serine 1844. Serine 1862 and serine 1887 each carry phosphoserine. Over residues 1879 to 1891 (TTRSSARRSQAGV) the composition is skewed to polar residues. The tubulin-binding domain stretch occupies residues 1882 to 1985 (SSARRSQAGV…AEGTGITTRQ (104 aa)). Residues 1892–1926 (SSGAPPGRNSFYMGTCQDEPEQLDDWNRIAELQQR) are GPSM2-binding domain. The span at 1955–1966 (EMKTGDPQETLR) shows a compositional bias: basic and acidic residues. Serine 1969 bears the Phosphoserine mark. The segment at 1981-2060 (ITTRQQRKRV…SILNTPKKLG (80 aa)) is membrane-binding domain 2. Residues 1984–1989 (RQQRKR) carry the Nuclear localization signal motif. At serine 1991 the chain carries Phosphoserine. Phosphothreonine is present on threonine 2000. Serine 2003 is modified (phosphoserine). Threonine 2015 is modified (phosphothreonine; by CDK1). Basic and acidic residues predominate over residues 2015 to 2032 (TPRDRHEGRKQSTTEAQK). Phosphoserine is present on serine 2047. A Phosphothreonine; by CDK1 modification is found at threonine 2055. Phosphoserine is present on residues serine 2062 and serine 2077. The residue at position 2087 (serine 2087) is a Phosphoserine; by CDK1. Residues 2089–2108 (RIATTTASAATAAAIGATPR) are compositionally biased toward low complexity. Threonine 2106 is modified (phosphothreonine; by CDK1).

As to quaternary structure, homodimer. Also forms multiarm oligomers by association of C-terminal tail domains, oligomers may further assemble to form a hexagonal nuclear lattice-like network. Associates with the dynein-dynactin complex; this association promotes the transport and accumulation of NUMA1 at the mitotic spindle poles that is inhibited by the BRISC complex in a PLK1-dependent manner. Part of a spindle orientation complex at least composed of GNAI1, GPSM2 and NUMA1. Interacts (via C-terminus) with microtubules (MTs); this interaction is direct and promotes both MT bundle formation and stability in a dynein-dynactin complex- and CDK1-independent manner. Interacts with EPB41 and EPB41L2; these interactions are negatively regulated by CDK1 during metaphase and are important for anaphase-specific localization of NUMA1 in symmetrically dividing cells. Interacts (via C-terminus) with GPSM2 (via TPR repeats); this interaction is direct, prevented by competitive binding of INSC, is inhibited in a PLK1-dependent manner, blocks the association of NUMA1 with MTs and inhibits NUMA1-induced MT bundle formation, prevents the association of NUMA1 with SPAG5, induces mitotic spindle pole localization of GPSM2, both metaphase cell cortex localization of NUMA1 and mitotic spindle organization. Does not interact with GPSM2 during anaphase. Interacts (via C-terminus) with the nuclear importin alpha/importin beta receptor; this interaction is inhibited by RanGTP. Interacts (via C-terminus) with KPNB1; this interaction is inhibited by RanGTP and the BRISC complex. Interacts with ABRAXAS2 and the BRISC complex; these interactions regulate mitotic spindle assembly. Interacts (via N-terminal end of the coiled-coil domain) with RAE1; this interaction promotes mitotic spindle formation. Interacts (via C-terminus) with SPAG5 (via C-terminus); this interaction promotes the recruitment of SPAG5 to the MTs at spindle poles in a dynein-dynactin-dependent manner and regulates mitotic spindle organization and proper chromosome alignment during mitosis. Interacts with TNKS; this interaction occurs at the onset of mitosis. Interacts with TNKS2. Interacts with tubulin. Interacts with KHDC3L (via C-terminus). Post-translationally, phosphorylation and dephosphorylation on Thr-2055 regulates the extent of cortical NUMA1 and the dynein-dynactin complex localization during mitotic metaphase and anaphase. In metaphase, phosphorylation on Thr-2055 occurs in a kinase CDK1-dependent manner; this phosphorylation maintains low levels of cortical dynein-dynactin complex at metaphase, and hence proper spindle positioning. In anaphase, dephosphorylated on Thr-2055 by phosphatase PPP2CA; this dephosphorylation stimulates its membrane association and with the dynein-dynactin complex its enrichment at the cell cortex, and hence robust spindle elongation. Probably also phosphorylated on Thr-2015 and Ser-2087 by CDK1; these phosphorylations may regulate its cell cortex recruitment during metaphase and anaphase. Phosphorylated on Thr-1047, Ser-1769, Ser-1772, Ser-1789 and Ser-1834 by PLK1; these phosphorylations induce cortical dynein-dynactin complex dissociation from the NUMA1-GPSM2 complex and negatively regulates cortical dynein-dynactin complex localization. In terms of processing, ADP-ribosylated by TNKS at the onset of mitosis; ADP-ribosylation is not required for its localization to spindle poles. O-glycosylated during cytokinesis at sites identical or close to phosphorylation sites, this interferes with the phosphorylation status. Post-translationally, ubiquitinated with 'Lys-63'-linked polyubiquitin chains. Deubiquitination by the BRISC complex is important for the incorporation of NUMA1 into mitotic spindle poles and normal spindle pole function, probably by modulating interactions between NUMA1, dynein-dynactin complex and importin-beta.

The protein resides in the nucleus. It localises to the nucleoplasm. The protein localises to the nucleus matrix. It is found in the chromosome. Its subcellular location is the cytoplasm. The protein resides in the cytoskeleton. It localises to the microtubule organizing center. The protein localises to the centrosome. It is found in the spindle pole. Its subcellular location is the cell cortex. The protein resides in the cell membrane. It localises to the lateral cell membrane. The protein localises to the cytosol. Functionally, microtubule (MT)-binding protein that plays a role in the formation and maintenance of the spindle poles and the alignement and the segregation of chromosomes during mitotic cell division. Functions to tether the minus ends of MTs at the spindle poles, which is critical for the establishment and maintenance of the spindle poles. Plays a role in the establishment of the mitotic spindle orientation during metaphase and elongation during anaphase in a dynein-dynactin-dependent manner. In metaphase, part of a ternary complex composed of GPSM2 and G(i) alpha proteins, that regulates the recruitment and anchorage of the dynein-dynactin complex in the mitotic cell cortex regions situated above the two spindle poles, and hence regulates the correct oritentation of the mitotic spindle. During anaphase, mediates the recruitment and accumulation of the dynein-dynactin complex at the cell membrane of the polar cortical region through direct association with phosphatidylinositol 4,5-bisphosphate (PI(4,5)P2), and hence participates in the regulation of the spindle elongation and chromosome segregation. Also binds to other polyanionic phosphoinositides, such as phosphatidylinositol 3-phosphate (PIP), lysophosphatidic acid (LPA) and phosphatidylinositol triphosphate (PIP3), in vitro. Also required for proper orientation of the mitotic spindle during asymmetric cell divisions. Plays a role in mitotic MT aster assembly. Involved in anastral spindle assembly. Positively regulates TNKS protein localization to spindle poles in mitosis. Highly abundant component of the nuclear matrix where it may serve a non-mitotic structural role, occupies the majority of the nuclear volume. Required for epidermal differentiation and hair follicle morphogenesis. This chain is Nuclear mitotic apparatus protein 1, found in Homo sapiens (Human).